Consider the following 503-residue polypeptide: U6 snRNA (guanine-N(2))-methyltransferase THUMPD2 (503 aa).

The 106-residue stretch at Cys-161–Val-266 folds into the THUMP domain.

It belongs to the methyltransferase superfamily. In terms of assembly, part of the heterodimeric THUMPD2-TRM112 methyltransferase complex; this complex forms an active tRNA methyltransferase, where TRMT112 acts as an activator of the catalytic subunit THUMPD2. In terms of tissue distribution, expressed in a variety of tissues including brain, colon, gingiva, heart, kidney, liver, lung, placenta, small intestine, spleen and thymus.

The protein localises to the nucleus. The enzyme catalyses guanosine in U6 snRNA + S-adenosyl-L-methionine = N(2)-methylguanosine in U6 snRNA + S-adenosyl-L-homocysteine + H(+). Catalytic subunit of the THUMPD2-TRM112 methyltransferase complex, that specifically mediates the S-adenosyl-L-methionine-dependent N(2)-methylation of guanosine nucleotides, most probably at position 72 (m2G72), in the U6snRNA of the major spliceosome. This modification in the U6 snRNA affects the constitutive splicing efficiency of introns that have suboptimal splice sites and can impact final mRNA levels. The chain is U6 snRNA (guanine-N(2))-methyltransferase THUMPD2 from Homo sapiens (Human).